Reading from the N-terminus, the 133-residue chain is Putative biopolymer transport protein ExbD-like 2 (133 aa).

Over M1–V9 the chain is Cytoplasmic. Residues V10–V30 traverse the membrane as a helical segment. Topologically, residues Q31 to N133 are periplasmic.

Belongs to the ExbD/TolR family.

Its subcellular location is the cell inner membrane. The protein is Putative biopolymer transport protein ExbD-like 2 of Helicobacter pylori (strain J99 / ATCC 700824) (Campylobacter pylori J99).